The chain runs to 255 residues: Hydroxyacylglutathione hydrolase (255 aa).

Zn(2+) contacts are provided by His56, His58, Asp60, His61, His114, Asp133, and His171.

The protein belongs to the metallo-beta-lactamase superfamily. Glyoxalase II family. As to quaternary structure, monomer. Zn(2+) is required as a cofactor.

It carries out the reaction an S-(2-hydroxyacyl)glutathione + H2O = a 2-hydroxy carboxylate + glutathione + H(+). The protein operates within secondary metabolite metabolism; methylglyoxal degradation; (R)-lactate from methylglyoxal: step 2/2. In terms of biological role, thiolesterase that catalyzes the hydrolysis of S-D-lactoyl-glutathione to form glutathione and D-lactic acid. The polypeptide is Hydroxyacylglutathione hydrolase (Cereibacter sphaeroides (strain ATCC 17023 / DSM 158 / JCM 6121 / CCUG 31486 / LMG 2827 / NBRC 12203 / NCIMB 8253 / ATH 2.4.1.) (Rhodobacter sphaeroides)).